The sequence spans 155 residues: Transcription antitermination protein NusB (155 aa).

It belongs to the NusB family.

Functionally, involved in transcription antitermination. Required for transcription of ribosomal RNA (rRNA) genes. Binds specifically to the boxA antiterminator sequence of the ribosomal RNA (rrn) operons. The polypeptide is Transcription antitermination protein NusB (Vibrio atlanticus (strain LGP32) (Vibrio splendidus (strain Mel32))).